A 1117-amino-acid chain; its full sequence is Mitochondrial protein cyt-4 (1117 aa).

The region spanning 561–916 (RQDFYTSTVY…LVHWQIQAAL (356 aa)) is the RNB domain. The disordered stretch occupies residues 705-730 (VVLEVGTPPSAEDEAPTRKMTKPDEL). Over residues 719–730 (APTRKMTKPDEL) the composition is skewed to basic and acidic residues.

It belongs to the RNR ribonuclease family. Homodimer.

It is found in the mitochondrion. Functionally, required for RNA 5'- and 3'-end processing and splicing. May act on the RNA processing enzymes directly, or it may act on other regulatory molecules, which influence the activity or synthesis of these enzymes. This Neurospora crassa (strain ATCC 24698 / 74-OR23-1A / CBS 708.71 / DSM 1257 / FGSC 987) protein is Mitochondrial protein cyt-4 (cyt-4).